The sequence spans 131 residues: Profilin LP04 (131 aa).

It belongs to the profilin family. Occurs in many kinds of cells as a complex with monomeric actin in a 1:1 ratio.

It localises to the cytoplasm. Its subcellular location is the cytoskeleton. In terms of biological role, binds to actin and affects the structure of the cytoskeleton. At high concentrations, profilin prevents the polymerization of actin, whereas it enhances it at low concentrations. By binding to PIP2, it inhibits the formation of IP3 and DG. The chain is Profilin LP04 from Oryza sativa subsp. indica (Rice).